Consider the following 113-residue polypeptide: T cell receptor alpha variable 13-2 (113 aa).

An N-terminal signal peptide occupies residues 1 to 21 (MAGIRALFMYLWLQLDWVSRG). In terms of domain architecture, Ig-like spans 22-113 (ESVGLHLPTL…DSAVYFCAEN (92 aa)). A disulfide bridge links Cys43 with Cys110. Asn87 carries N-linked (GlcNAc...) asparagine glycosylation.

Alpha-beta TR is a heterodimer composed of an alpha and beta chain; disulfide-linked. The alpha-beta TR is associated with the transmembrane signaling CD3 coreceptor proteins to form the TR-CD3 (TcR or TCR). The assembly of alpha-beta TR heterodimers with CD3 occurs in the endoplasmic reticulum where a single alpha-beta TR heterodimer associates with one CD3D-CD3E heterodimer, one CD3G-CD3E heterodimer and one CD247 homodimer forming a stable octameric structure. CD3D-CD3E and CD3G-CD3E heterodimers preferentially associate with TR alpha and TR beta chains, respectively. The association of the CD247 homodimer is the last step of TcR assembly in the endoplasmic reticulum and is required for transport to the cell surface.

Its subcellular location is the cell membrane. Its function is as follows. V region of the variable domain of T cell receptor (TR) alpha chain that participates in the antigen recognition. Alpha-beta T cell receptors are antigen specific receptors which are essential to the immune response and are present on the cell surface of T lymphocytes. Recognize peptide-major histocompatibility (MH) (pMH) complexes that are displayed by antigen presenting cells (APC), a prerequisite for efficient T cell adaptive immunity against pathogens. Binding of alpha-beta TR to pMH complex initiates TR-CD3 clustering on the cell surface and intracellular activation of LCK that phosphorylates the ITAM motifs of CD3G, CD3D, CD3E and CD247 enabling the recruitment of ZAP70. In turn ZAP70 phosphorylates LAT, which recruits numerous signaling molecules to form the LAT signalosome. The LAT signalosome propagates signal branching to three major signaling pathways, the calcium, the mitogen-activated protein kinase (MAPK) kinase and the nuclear factor NF-kappa-B (NF-kB) pathways, leading to the mobilization of transcription factors that are critical for gene expression and essential for T cell growth and differentiation. The T cell repertoire is generated in the thymus, by V-(D)-J rearrangement. This repertoire is then shaped by intrathymic selection events to generate a peripheral T cell pool of self-MH restricted, non-autoaggressive T cells. Post-thymic interaction of alpha-beta TR with the pMH complexes shapes TR structural and functional avidity. The chain is T cell receptor alpha variable 13-2 from Homo sapiens (Human).